A 1025-amino-acid chain; its full sequence is Rho GTPase-activating protein Graf (1025 aa).

In terms of domain architecture, PH spans 271-388 (IFTKRGYLFL…WISAMDGTEP (118 aa)). Positions 402 to 589 (YHLDEAGFMF…ILIDNYERIF (188 aa)) constitute a Rho-GAP domain. Positions 824–866 (GSASGPQQHPPVQRGLHSYGQTKHYSPLMPTSTSSSNDSVCDS) are disordered. Residues 854–866 (TSTSSSNDSVCDS) are compositionally biased toward low complexity. The region spanning 963 to 1023 (TGTARVRTLY…PENYVEHLKP (61 aa)) is the SH3 domain.

Interacts with Egfr (when ubiquitinated). As to expression, in the adult brain, expressed in the antennal lobe, the subesophageal ganglion and the alpha/beta neurons of the mushroom body.

It is found in the cytoplasm. It localises to the cytosol. The protein resides in the cytoplasmic vesicle. In terms of biological role, GTPase-activating protein for Rho family proteins. Essential component of the CLIC (clathrin-independent carrier)/GEEC (GPI-anchored protein-enriched early endocytic compartment) endocytic pathway. During hematopoiesis, inhibits Egfr-ras-MAPK signaling by promoting Spi-induced Egfr internalization through CLIC/GEEC endocytosis, thereby preventing plasmatocyte overproliferation. Essential for normal mushroom body (MB) development and consequently the formation of olfactory long-term memories. During MD development, required to stop the MB beta-lobe from crossing the brain midline, possibly acting via its role in the CLIC/GEEC endocytic pathway to down-regulate the Egfr-ras-MAPK signaling at the tip of the beta-lobes. Required during embryo cellularization for maintaining and regulating the rate of actomyosin ring constriction. During cellularization, inhibits Rho-GTP levels at the furrow canal tip in a spatiotemporal manner, thus delaying the onset of actomyosin contraction and ensuring appropriate closure of the cells at the base of nuclei after membrane extension. In Drosophila melanogaster (Fruit fly), this protein is Rho GTPase-activating protein Graf.